The sequence spans 376 residues: cAMP-dependent protein kinase type I regulatory subunit (376 aa).

Residues 1-131 (MSYMMAKTLE…ALSKAIAKNV (131 aa)) are dimerization and phosphorylation. The tract at residues 72 to 93 (PDDCEDLSPMPQTAAPPVRRRG) is disordered. The Pseudophosphorylation motif motif lies at 91–95 (RRGGI). Phosphoserine is present on serine 96. 3',5'-cyclic AMP-binding positions include 132 to 247 (LFAH…FLSR), glutamate 197, arginine 206, 250 to 371 (ILES…YNSF), glutamate 321, and arginine 330.

It belongs to the cAMP-dependent kinase regulatory chain family. Tetramer, composed of 2 regulatory (R) and 2 catalytic (C) subunits. In the presence of cAMP it dissociates into 2 active monomeric C subunits and an R dimer. The pseudophosphorylation site binds to the substrate-binding region of the catalytic chain but is not phosphorylated. The physiological significance of phosphorylations by other kinases is unclear.

The protein is cAMP-dependent protein kinase type I regulatory subunit (Pka-R1) of Drosophila melanogaster (Fruit fly).